A 778-amino-acid polypeptide reads, in one-letter code: Endonuclease MutS2 (778 aa).

Residue 332–339 coordinates ATP; sequence GPNTGGKT. In terms of domain architecture, Smr spans 703-778; that stretch reads IDLRGKMVDE…GLGCTVVTLK (76 aa).

Belongs to the DNA mismatch repair MutS family. MutS2 subfamily. Homodimer. Binds to stalled ribosomes, contacting rRNA.

Its function is as follows. Endonuclease that is involved in the suppression of homologous recombination and thus may have a key role in the control of bacterial genetic diversity. Acts as a ribosome collision sensor, splitting the ribosome into its 2 subunits. Detects stalled/collided 70S ribosomes which it binds and splits by an ATP-hydrolysis driven conformational change. Acts upstream of the ribosome quality control system (RQC), a ribosome-associated complex that mediates the extraction of incompletely synthesized nascent chains from stalled ribosomes and their subsequent degradation. Probably generates substrates for RQC. This Fusobacterium nucleatum subsp. nucleatum (strain ATCC 25586 / DSM 15643 / BCRC 10681 / CIP 101130 / JCM 8532 / KCTC 2640 / LMG 13131 / VPI 4355) protein is Endonuclease MutS2.